A 141-amino-acid polypeptide reads, in one-letter code: Regulator of ribonuclease activity B (141 aa).

The tract at residues 112 to 141 (GTYFEDPNAPDDEDDNDDLFPPEEDEPRLH) is disordered. Positions 119 to 141 (NAPDDEDDNDDLFPPEEDEPRLH) are enriched in acidic residues.

Belongs to the RraB family. Interacts with the C-terminal region of Rne.

It is found in the cytoplasm. Functionally, globally modulates RNA abundance by binding to RNase E (Rne) and regulating its endonucleolytic activity. Can modulate Rne action in a substrate-dependent manner by altering the composition of the degradosome. The protein is Regulator of ribonuclease activity B of Xenorhabdus nematophila (strain ATCC 19061 / DSM 3370 / CCUG 14189 / LMG 1036 / NCIMB 9965 / AN6).